Reading from the N-terminus, the 1534-residue chain is Alpha-2-macroglobulin homolog (1534 aa).

Positions 1–38 (MDTQRFQSQFHWHLSFKFSGAIAACLSLSLVGTGLANA) are cleaved as a signal peptide.

It belongs to the protease inhibitor I39 (alpha-2-macroglobulin) family. Bacterial alpha-2-macroglobulin subfamily.

The chain is Alpha-2-macroglobulin homolog (yfaS) from Escherichia coli O157:H7.